A 348-amino-acid polypeptide reads, in one-letter code: 3-isopropylmalate dehydrogenase (348 aa).

76 to 87 provides a ligand contact to NAD(+); sequence GPKWTDPNNRPE. Arg-94, Arg-104, Arg-132, and Asp-217 together coordinate substrate. 3 residues coordinate Mg(2+): Asp-217, Asp-241, and Asp-245. 275-287 serves as a coordination point for NAD(+); that stretch reads GSAPDIAGKNVAN.

Belongs to the isocitrate and isopropylmalate dehydrogenases family. LeuB type 1 subfamily. As to quaternary structure, homodimer. It depends on Mg(2+) as a cofactor. The cofactor is Mn(2+).

The protein localises to the cytoplasm. It catalyses the reaction (2R,3S)-3-isopropylmalate + NAD(+) = 4-methyl-2-oxopentanoate + CO2 + NADH. It participates in amino-acid biosynthesis; L-leucine biosynthesis; L-leucine from 3-methyl-2-oxobutanoate: step 3/4. Its function is as follows. Catalyzes the oxidation of 3-carboxy-2-hydroxy-4-methylpentanoate (3-isopropylmalate) to 3-carboxy-4-methyl-2-oxopentanoate. The product decarboxylates to 4-methyl-2 oxopentanoate. In Staphylococcus aureus (strain COL), this protein is 3-isopropylmalate dehydrogenase.